Consider the following 399-residue polypeptide: STOREKEEPER protein (399 aa).

Disordered regions lie at residues 1–160 (MAPK…RSLW) and 250–301 (GISN…EEQQ). Acidic residues predominate over residues 20–54 (EEQELVEESQEEEEQQSREEEGEEESGEETEEDEE). The segment covering 69–79 (KLVQTPQKPQF) has biased composition (polar residues). Low complexity-rich tracts occupy residues 80–100 (SSES…SGNS) and 116–125 (AAKAATPSKP). 2 stretches are compositionally biased toward basic and acidic residues: residues 143 to 152 (KIAEEEEKKS) and 270 to 299 (KTVE…KEEE).

It belongs to the GeBP family. In terms of tissue distribution, expressed in tubers and in leaves treated with sucrose.

Its subcellular location is the nucleus. May act as a transcriptional regulator. Binds specifically to the B-box motif, a promoter element that is required for the tuber-specific and sucrose inducible expression of the patatin gene. This is STOREKEEPER protein from Solanum tuberosum (Potato).